Consider the following 231-residue polypeptide: Urease accessory protein UreE (231 aa).

The segment at 185–231 (VASPLDEPHGSGLHIHGIHSHEEGHSHGDHDHDHSHSHGDHDHDHKH) is disordered. Residues 203 to 231 (HSHEEGHSHGDHDHDHSHSHGDHDHDHKH) are compositionally biased toward basic and acidic residues.

Belongs to the UreE family.

Its subcellular location is the cytoplasm. Involved in urease metallocenter assembly. Binds nickel. Probably functions as a nickel donor during metallocenter assembly. The protein is Urease accessory protein UreE of Yersinia pestis bv. Antiqua (strain Antiqua).